Consider the following 139-residue polypeptide: Desampylase (139 aa).

An MPN domain is found at 6–139; sequence LSLAADARDS…EFRELSVAVE (134 aa). E31 functions as the Proton donor/acceptor in the catalytic mechanism. Residues H88, H90, and D101 each coordinate Zn(2+). Residues 88–101 carry the JAMM motif motif; sequence HSHPESDPVPSATD.

Belongs to the peptidase M67B family. In terms of assembly, monomer. The cofactor is Zn(2+).

The enzyme catalyses an N(6)-[small archaeal modifier protein]-[protein]-L-lysine + H2O = a [protein]-L-lysine + a [small archaeal modifier protein].. Its activity is regulated as follows. Inhibited by EDTA and N-ethylmaleimide (NEM) in vitro. Functionally, metalloprotease that displays desampylase (DSAMP) activity, cleaving ubiquitin-like small archaeal modifier proteins (SAMP1, SAMP2 and SAMP3) from protein conjugates (isopeptide- and linear-linked). Thus, likely regulates sampylation and the pools of 'free' SAMP available for protein modification. Functions as a specific and not a general protease since it is unable to hydrolyze a variety of unmodified proteins otherwise hydrolyzed by proteinase K. The chain is Desampylase from Haloferax volcanii (strain ATCC 29605 / DSM 3757 / JCM 8879 / NBRC 14742 / NCIMB 2012 / VKM B-1768 / DS2) (Halobacterium volcanii).